The sequence spans 144 residues: Large ribosomal subunit protein uL11 (144 aa).

Belongs to the universal ribosomal protein uL11 family. In terms of assembly, part of the ribosomal stalk of the 50S ribosomal subunit. Interacts with L10 and the large rRNA to form the base of the stalk. L10 forms an elongated spine to which L12 dimers bind in a sequential fashion forming a multimeric L10(L12)X complex. Post-translationally, one or more lysine residues are methylated.

In terms of biological role, forms part of the ribosomal stalk which helps the ribosome interact with GTP-bound translation factors. The protein is Large ribosomal subunit protein uL11 of Frankia alni (strain DSM 45986 / CECT 9034 / ACN14a).